A 154-amino-acid chain; its full sequence is Large ribosomal subunit protein uL13 (154 aa).

The protein belongs to the universal ribosomal protein uL13 family. Part of the 50S ribosomal subunit.

Its function is as follows. This protein is one of the early assembly proteins of the 50S ribosomal subunit, although it is not seen to bind rRNA by itself. It is important during the early stages of 50S assembly. This chain is Large ribosomal subunit protein uL13, found in Rhizobium etli (strain CIAT 652).